Consider the following 234-residue polypeptide: (5-formylfuran-3-yl)methyl phosphate synthase (234 aa).

Lys27 (schiff-base intermediate with substrate) is an active-site residue. Lys85 serves as the catalytic Proton acceptor.

The protein belongs to the MfnB family.

The catalysed reaction is 2 D-glyceraldehyde 3-phosphate = 4-(hydroxymethyl)-2-furancarboxaldehyde phosphate + phosphate + 2 H2O. The protein operates within cofactor biosynthesis; methanofuran biosynthesis. In terms of biological role, catalyzes the formation of 4-(hydroxymethyl)-2-furancarboxaldehyde phosphate (4-HFC-P) from two molecules of glyceraldehyde-3-P (GA-3-P). The polypeptide is (5-formylfuran-3-yl)methyl phosphate synthase (Methanosarcina acetivorans (strain ATCC 35395 / DSM 2834 / JCM 12185 / C2A)).